The chain runs to 224 residues: Urease accessory protein UreF (224 aa).

The protein belongs to the UreF family. In terms of assembly, ureD, UreF and UreG form a complex that acts as a GTP-hydrolysis-dependent molecular chaperone, activating the urease apoprotein by helping to assemble the nickel containing metallocenter of UreC. The UreE protein probably delivers the nickel.

The protein resides in the cytoplasm. Its function is as follows. Required for maturation of urease via the functional incorporation of the urease nickel metallocenter. This Nitrosococcus oceani (strain ATCC 19707 / BCRC 17464 / JCM 30415 / NCIMB 11848 / C-107) protein is Urease accessory protein UreF.